A 435-amino-acid polypeptide reads, in one-letter code: Casein kinase I homolog 2 (435 aa).

The 271-residue stretch at 12-282 (YRVGRKIGEG…FLQELFDDVL (271 aa)) folds into the Protein kinase domain. ATP-binding positions include 18–26 (IGEGSFGVI) and lysine 41. Aspartate 131 (proton acceptor) is an active-site residue. The residue at position 361 (serine 361) is a Phosphoserine.

The protein belongs to the protein kinase superfamily. CK1 Ser/Thr protein kinase family. Casein kinase I subfamily.

It is found in the cytoplasm. The catalysed reaction is L-seryl-[protein] + ATP = O-phospho-L-seryl-[protein] + ADP + H(+). It carries out the reaction L-threonyl-[protein] + ATP = O-phospho-L-threonyl-[protein] + ADP + H(+). Casein kinases are operationally defined by their preferential utilization of acidic proteins such as caseins as substrates. May contribute to the regulation of morphology. This is Casein kinase I homolog 2 (cki2) from Schizosaccharomyces pombe (strain 972 / ATCC 24843) (Fission yeast).